The chain runs to 210 residues: Putative O-methyltransferase MSMEG_5073/MSMEI_4947 (210 aa).

S-adenosyl-L-methionine contacts are provided by residues valine 37, glutamate 59, glycine 61–threonine 62, serine 67, aspartate 85, and valine 86. Aspartate 133 contributes to the substrate binding site. Position 135 (aspartate 135) interacts with S-adenosyl-L-methionine.

Belongs to the class I-like SAM-binding methyltransferase superfamily. Cation-dependent O-methyltransferase family.

The chain is Putative O-methyltransferase MSMEG_5073/MSMEI_4947 from Mycolicibacterium smegmatis (strain ATCC 700084 / mc(2)155) (Mycobacterium smegmatis).